Reading from the N-terminus, the 187-residue chain is Shikimate kinase (187 aa).

Residue 14–19 (GSGKST) participates in ATP binding. Position 18 (S18) interacts with Mg(2+). 3 residues coordinate substrate: D36, R60, and G82. R120 provides a ligand contact to ATP. A substrate-binding site is contributed by R147.

It belongs to the shikimate kinase family. In terms of assembly, monomer. Requires Mg(2+) as cofactor.

Its subcellular location is the cytoplasm. The enzyme catalyses shikimate + ATP = 3-phosphoshikimate + ADP + H(+). Its pathway is metabolic intermediate biosynthesis; chorismate biosynthesis; chorismate from D-erythrose 4-phosphate and phosphoenolpyruvate: step 5/7. Catalyzes the specific phosphorylation of the 3-hydroxyl group of shikimic acid using ATP as a cosubstrate. This is Shikimate kinase from Chlorobaculum parvum (strain DSM 263 / NCIMB 8327) (Chlorobium vibrioforme subsp. thiosulfatophilum).